Reading from the N-terminus, the 130-residue chain is Transcription antitermination protein NusB (130 aa).

The protein belongs to the NusB family.

Involved in transcription antitermination. Required for transcription of ribosomal RNA (rRNA) genes. Binds specifically to the boxA antiterminator sequence of the ribosomal RNA (rrn) operons. This chain is Transcription antitermination protein NusB, found in Bacillus mycoides (strain KBAB4) (Bacillus weihenstephanensis).